A 389-amino-acid polypeptide reads, in one-letter code: Gustatory receptor 68a (389 aa).

Residues 1–42 lie on the Cytoplasmic side of the membrane; the sequence is MKIYQDIYPISKPSQIFAILPFYSGDVDDGFRFGGLGRWYGR. A helical membrane pass occupies residues 43–63; it reads LVALIILIGSLTLGEDVLFAS. The Extracellular portion of the chain corresponds to 64-82; sequence KEYRLVASAQGDTEEINRT. Residue Asn-80 is glycosylated (N-linked (GlcNAc...) asparagine). Residues 83–103 traverse the membrane as a helical segment; it reads IETLLCIISYTMVVLSSVQNA. Residues 104 to 133 lie on the Cytoplasmic side of the membrane; the sequence is SRHFRTLHDIAKIDEYLLANGFRETYSCRN. A helical membrane pass occupies residues 134-154; that stretch reads LTILVTSAAGGVLAVAFYYIH. At 155–164 the chain is on the extracellular side; sequence YRSGIGAKRQ. Residues 165-185 form a helical membrane-spanning segment; the sequence is IILLLIYFLQLLYSTLLALYL. Residues 186-236 lie on the Cytoplasmic side of the membrane; sequence RTLMMNLAQRIGFLNQKLDTFNLQDCGHMENWRELSNLIEVLCKFRYITEN. Residues 237–257 form a helical membrane-spanning segment; it reads INCVAGVSLLFYFGFSFYTVT. Asn-258 carries N-linked (GlcNAc...) asparagine glycosylation. Topologically, residues 258 to 281 are extracellular; that stretch reads NQSYLAFATLTAGSLSSKTEVADT. Residues 282 to 302 traverse the membrane as a helical segment; that stretch reads IGLSCIWVLAETITMIVICSA. Residues 303–352 lie on the Cytoplasmic side of the membrane; it reads CDGLASEVNGTAQILARIYGKSKQFQNLIDKFLTKSIKQDLQFTAYGFFS. A helical transmembrane segment spans residues 353–373; it reads IDNSTLFKIFSAVTTYLVILI. Over 374 to 389 the chain is Extracellular; the sequence is QFKQLEDSKVEDISQA.

The protein belongs to the insect chemoreceptor superfamily. Gustatory receptor (GR) family. Gr21a subfamily. Expressed in chemosensory neurons of about 20 male-specific gustatory bristles in the forelegs. No expression is seen in the mechanosensory neurons. In larvae, expressed in the ventral pharyngeal sense organ.

The protein localises to the cell membrane. In terms of biological role, dsx-dependent essential component of pheromone-driven courtship behavior. Recognizes a female pheromone involved in the second step (tapping step) of the courtship display which is essential for efficient execution of the entire courtship sequence and timely mating. Required for detection of the male sex pheromone CH503 which is transferred from males to females during mating and inhibits courtship behavior by other males. Gr68a-expressing neurons in the male foreleg relay signals to the suboesophageal zone (SEZ) and courtship suppression is mediated by the release of the neuropeptide tachykinin from a cluster of 8-10 neurons in the SEZ. This is Gustatory receptor 68a (Gr68a) from Drosophila melanogaster (Fruit fly).